The sequence spans 745 residues: Heterogeneous nuclear ribonucleoprotein U-like protein 2 (745 aa).

Residues V3–L37 enclose the SAP domain. Disordered stretches follow at residues D44–E239 and E625–R664. Over residues G73–P97 the composition is skewed to acidic residues. Over residues G142–D161 the composition is skewed to basic and acidic residues. At S159 the chain carries Phosphoserine. Phosphothreonine is present on T163. Phosphoserine occurs at positions 166, 183, 186, 224, and 226. Over residues S183–H221 the composition is skewed to basic and acidic residues. Positions S224 to E417 constitute a B30.2/SPRY domain. The span at P230–E239 shows a compositional bias: acidic residues. Residues E625 to R637 show a composition bias toward basic and acidic residues. The span at T638–R652 shows a compositional bias: basic residues. Omega-N-methylarginine occurs at positions 654, 682, 736, and 745.

Binds to MLF1 and retains it in the nucleus.

The protein localises to the nucleus. The chain is Heterogeneous nuclear ribonucleoprotein U-like protein 2 (Hnrnpul2) from Mus musculus (Mouse).